A 382-amino-acid polypeptide reads, in one-letter code: Putative 12-oxophytodienoate reductase 3 (382 aa).

Residues 37-39, Ala-70, and Gln-112 contribute to the FMN site; that span reads PLT. Residues 120-138 show a composition bias toward polar residues; the sequence is STNDQQPNGQAPISSTDKQ. A disordered region spans residues 120–147; that stretch reads STNDQQPNGQAPISSTDKQITPDDSHTV. A substrate-binding site is contributed by 184–187; it reads HGAH. Tyr-189 acts as the Proton donor in catalysis. Arg-236 serves as a coordination point for FMN. Arg-277 is a substrate binding site. FMN is bound by residues Gly-307 and 328–329; that span reads GR.

The protein belongs to the NADH:flavin oxidoreductase/NADH oxidase family. FMN serves as cofactor.

In terms of biological role, putative oxophytodienoate reductase that may be involved in the biosynthesis or metabolism of oxylipin signaling molecules. This Oryza sativa subsp. japonica (Rice) protein is Putative 12-oxophytodienoate reductase 3 (OPR3).